The chain runs to 488 residues: MHRVRNKPVKSTATASVKHLIKQRGGDGATAASKSANDYNNNDSLLTDMQEPSIDTDKLSYEIFSILESKFLFGYDDSKPEPANSVVAGSIKNQRGKICILSIDGGGMRGILPGKALAYLEHALKSKSGDPNARIADYFDVAAGSGIGGIYTAMLFGSRDGNRPIFKADDTWQFLTRNAKGLYGGAGILKRVLRTGSGCCSGTAKLKKVMKESFSELTLKDTLKPVLIPCYDLKSSGPFLFSRADALETDGYDFRLSEVCRATWAEPGVFEPVEMKSVDGQTKCVAVGGGLAMSNPTAAAITHVLHNKQEFPFVRGVEDLLVLSLGMGQLLDVSYEYDRIIKWKAKHWARPAALISNDGAADTVDQAVAMAFGHCRSSNYVRIQANGSNLGPWSPNMDTDPSGSNVNMLMGVAEEMLKQKNVESVLFGGKRIDEQSNFEKLDWLAGELVLEHQRRNSRIAPTVAFKQSVHRADQKTSDKDIGVTARER.

The disordered stretch occupies residues 23–49 (QRGGDGATAASKSANDYNNNDSLLTDM). Residues 32–47 (ASKSANDYNNNDSLLT) are compositionally biased toward polar residues. The PNPLA domain maps to 101 to 301 (LSIDGGGMRG…AMSNPTAAAI (201 aa)). A GXGXXG motif is present at residues 105 to 110 (GGGMRG). Ser-145 (nucleophile) is an active-site residue.

This sequence belongs to the patatin family. As to expression, highly expressed in roots and at lower levels in leaves, stems, flowers and siliques.

Its subcellular location is the cell membrane. Its function is as follows. Possesses non-specific lipolytic acyl hydrolase (LAH) activity. Catalyzes the hydrolysis of the galactolipids monogalactosyldiacylglycerol (MGDG) and digalactosyldiacylglycerol (DGDG), and the phoshpolipids phosphatidylcholine (PC), phosphatidylethanolamine (PE), phosphatidylglycerol (PG), phosphatidic acid (PA), phosphatidylserine (PS). Favors the release of fatty acid at the sn-2 position for PC. Possesses acyl-CoA thioesterase activity. Negatively affects disease resistance to the necrotic fungal pathogen Botrytis cinerea and the avirulent bacteria Pseudomonas syringae by promoting cell death and reducing the efficiency of the hypersensitive response, respectively. However, PLP2 contributes to resistance to cucumber mosaic virus (CMV), an obligate parasite inducing hypersensitive response. May negatively regulate oxylipin production, possibly via participating in membrane repair that includes removal of oxidatively modified lipids. Enzymatic products of PLP2 may influence cellulose content and cell elongation. This is Patatin-like protein 7 (PLP7) from Arabidopsis thaliana (Mouse-ear cress).